Consider the following 258-residue polypeptide: Caffeoyl-CoA O-methyltransferase 1 (258 aa).

Over residues methionine 1–alanine 16 the composition is skewed to low complexity. The disordered stretch occupies residues methionine 1–histidine 31. The segment covering glutamine 22–histidine 31 has biased composition (basic and acidic residues). Lysine 32 contributes to the substrate binding site. S-adenosyl-L-methionine-binding positions include threonine 74, glutamate 96, glycine 98–valine 99, serine 104, aspartate 122, and alanine 151. Aspartate 174 serves as a coordination point for substrate. Aspartate 174 lines the a divalent metal cation pocket. Aspartate 176 lines the S-adenosyl-L-methionine pocket. Residues aspartate 200 and asparagine 201 each contribute to the a divalent metal cation site. Asparagine 205 provides a ligand contact to substrate.

This sequence belongs to the class I-like SAM-binding methyltransferase superfamily. Cation-dependent O-methyltransferase family. CCoAMT subfamily. The cofactor is a divalent metal cation.

It catalyses the reaction (E)-caffeoyl-CoA + S-adenosyl-L-methionine = (E)-feruloyl-CoA + S-adenosyl-L-homocysteine + H(+). Its pathway is aromatic compound metabolism; phenylpropanoid biosynthesis. Methylates caffeoyl-CoA to feruloyl-CoA and 5-hydroxyferuloyl-CoA to sinapoyl-CoA. Plays a role in the synthesis of feruloylated polysaccharides. Involved in the reinforcement of the plant cell wall. Also involved in the responding to wounding or pathogen challenge by the increased formation of cell wall-bound ferulic acid polymers. This chain is Caffeoyl-CoA O-methyltransferase 1 (CCOAOMT1), found in Zea mays (Maize).